Here is a 185-residue protein sequence, read N- to C-terminus: ATP synthase subunit b 1 (185 aa).

Residues 4–24 traverse the membrane as a helical segment; that stretch reads TLAIALTLATTSPAFAAGGGW.

Belongs to the ATPase B chain family. In terms of assembly, F-type ATPases have 2 components, F(1) - the catalytic core - and F(0) - the membrane proton channel. F(1) has five subunits: alpha(3), beta(3), gamma(1), delta(1), epsilon(1). F(0) has three main subunits: a(1), b(2) and c(10-14). The alpha and beta chains form an alternating ring which encloses part of the gamma chain. F(1) is attached to F(0) by a central stalk formed by the gamma and epsilon chains, while a peripheral stalk is formed by the delta and b chains.

The protein resides in the cell inner membrane. Its function is as follows. F(1)F(0) ATP synthase produces ATP from ADP in the presence of a proton or sodium gradient. F-type ATPases consist of two structural domains, F(1) containing the extramembraneous catalytic core and F(0) containing the membrane proton channel, linked together by a central stalk and a peripheral stalk. During catalysis, ATP synthesis in the catalytic domain of F(1) is coupled via a rotary mechanism of the central stalk subunits to proton translocation. Functionally, component of the F(0) channel, it forms part of the peripheral stalk, linking F(1) to F(0). This Ruegeria sp. (strain TM1040) (Silicibacter sp.) protein is ATP synthase subunit b 1.